Here is a 143-residue protein sequence, read N- to C-terminus: Cytochrome c-type biogenesis protein CcmE (143 aa).

Residues 1–8 (MNPVRRRK) are Cytoplasmic-facing. Residues 9-29 (LFILLFALTILSAAAALVLYA) form a helical; Signal-anchor for type II membrane protein membrane-spanning segment. The Periplasmic portion of the chain corresponds to 30–143 (LRQNISLFYT…KSALADKVKQ (114 aa)). Residues histidine 124 and tyrosine 128 each contribute to the heme site.

It belongs to the CcmE/CycJ family.

Its subcellular location is the cell inner membrane. Its function is as follows. Heme chaperone required for the biogenesis of c-type cytochromes. Transiently binds heme delivered by CcmC and transfers the heme to apo-cytochromes in a process facilitated by CcmF and CcmH. The sequence is that of Cytochrome c-type biogenesis protein CcmE from Legionella pneumophila (strain Corby).